Consider the following 541-residue polypeptide: Chaperonin GroEL 2 (541 aa).

ATP is bound by residues 29-32, 86-90, G413, and D492; these read TLGP and DGTTT.

The protein belongs to the chaperonin (HSP60) family. In terms of assembly, forms a cylinder of 14 subunits composed of two heptameric rings stacked back-to-back. Interacts with the co-chaperonin GroES.

It is found in the cytoplasm. The catalysed reaction is ATP + H2O + a folded polypeptide = ADP + phosphate + an unfolded polypeptide.. Together with its co-chaperonin GroES, plays an essential role in assisting protein folding. The GroEL-GroES system forms a nano-cage that allows encapsulation of the non-native substrate proteins and provides a physical environment optimized to promote and accelerate protein folding. The sequence is that of Chaperonin GroEL 2 from Acidothermus cellulolyticus (strain ATCC 43068 / DSM 8971 / 11B).